The chain runs to 786 residues: Endonuclease MutS2 (786 aa).

335–342 serves as a coordination point for ATP; that stretch reads GPNTGGKT. Residues 711-786 enclose the Smr domain; it reads LDLRGERFEN…GLGVTVVELK (76 aa).

It belongs to the DNA mismatch repair MutS family. MutS2 subfamily. In terms of assembly, homodimer. Binds to stalled ribosomes, contacting rRNA.

Functionally, endonuclease that is involved in the suppression of homologous recombination and thus may have a key role in the control of bacterial genetic diversity. In terms of biological role, acts as a ribosome collision sensor, splitting the ribosome into its 2 subunits. Detects stalled/collided 70S ribosomes which it binds and splits by an ATP-hydrolysis driven conformational change. Acts upstream of the ribosome quality control system (RQC), a ribosome-associated complex that mediates the extraction of incompletely synthesized nascent chains from stalled ribosomes and their subsequent degradation. Probably generates substrates for RQC. The sequence is that of Endonuclease MutS2 from Bacillus cereus (strain AH820).